The following is a 389-amino-acid chain: Chromobox protein homolog 8 (389 aa).

The region spanning Phe-11–Pro-69 is the Chromo domain. Residues Ser-110 and Ser-130 each carry the phosphoserine modification. A disordered region spans residues Leu-124–Phe-241. A compositionally biased stretch (basic and acidic residues) spans Glu-145 to Pro-189. Phosphoserine is present on residues Ser-191, Ser-256, Ser-265, Ser-311, Ser-332, and Ser-352. The disordered stretch occupies residues Gly-298–Gln-327.

As to quaternary structure, component of a PRC1-like complex. Interacts with RING1 RNF2, PCGF1, PCGF2, PCGF3, BMI1, PCGF5 and PCGF6. Interacts with MLLT3 and histone H3. Interacts with PHC2.

Its subcellular location is the nucleus. Functionally, component of a Polycomb group (PcG) multiprotein PRC1-like complex, a complex class required to maintain the transcriptionally repressive state of many genes, including Hox genes, throughout development. PcG PRC1 complex acts via chromatin remodeling and modification of histones; it mediates monoubiquitination of histone H2A 'Lys-119', rendering chromatin heritably changed in its expressibility. The protein is Chromobox protein homolog 8 (CBX8) of Homo sapiens (Human).